A 309-amino-acid polypeptide reads, in one-letter code: p-hydroxybenzoic acid efflux pump subunit AaeA (309 aa).

Residues 12–32 (AITVVLVILAFIAIFNAWVYY) traverse the membrane as a helical segment.

This sequence belongs to the membrane fusion protein (MFP) (TC 8.A.1) family.

The protein resides in the cell inner membrane. Functionally, forms an efflux pump with AaeB. The sequence is that of p-hydroxybenzoic acid efflux pump subunit AaeA from Escherichia coli O157:H7.